A 126-amino-acid polypeptide reads, in one-letter code: Protein FMP49, mitochondrial (126 aa).

The protein localises to the mitochondrion. This is Protein FMP49, mitochondrial from Saccharomyces cerevisiae (strain ATCC 204508 / S288c) (Baker's yeast).